The following is a 404-amino-acid chain: Flavohemoprotein (404 aa).

The Globin domain occupies 1–138 (MLSEQTRSLV…LADTLIGIEN (138 aa)). His85 contributes to the heme b binding site. Active-site charge relay system residues include Tyr95 and Glu137. Residues 149 to 404 (GGWSGWRPFR…EVFGSHPGDD (256 aa)) form a reductase region. Positions 152–263 (SGWRPFRVAK…SAPQGDFFLH (112 aa)) constitute an FAD-binding FR-type domain. FAD-binding positions include Tyr190 and 206-209 (RQYS). 276–281 (GVGQTP) is an NADP(+) binding site. 396 to 399 (VFGS) lines the FAD pocket.

Belongs to the globin family. Two-domain flavohemoproteins subfamily. This sequence in the C-terminal section; belongs to the flavoprotein pyridine nucleotide cytochrome reductase family. Heme b is required as a cofactor. Requires FAD as cofactor.

The catalysed reaction is 2 nitric oxide + NADPH + 2 O2 = 2 nitrate + NADP(+) + H(+). It catalyses the reaction 2 nitric oxide + NADH + 2 O2 = 2 nitrate + NAD(+) + H(+). In terms of biological role, is involved in NO detoxification in an aerobic process, termed nitric oxide dioxygenase (NOD) reaction that utilizes O(2) and NAD(P)H to convert NO to nitrate, which protects the bacterium from various noxious nitrogen compounds. Therefore, plays a central role in the inducible response to nitrosative stress. The protein is Flavohemoprotein of Chromobacterium violaceum (strain ATCC 12472 / DSM 30191 / JCM 1249 / CCUG 213 / NBRC 12614 / NCIMB 9131 / NCTC 9757 / MK).